The chain runs to 533 residues: (E)-beta-farnesene synthase (533 aa).

Aspartate 286 and aspartate 290 together coordinate Mg(2+). Substrate-binding residues include aspartate 286, aspartate 290, arginine 427, and asparagine 430. Positions 286 to 290 (DDMMD) match the DDXXD motif motif. Mg(2+)-binding residues include asparagine 430 and glutamate 438.

This sequence belongs to the terpene synthase family. Monomer. Mg(2+) serves as cofactor. Requires Mn(2+) as cofactor.

The protein localises to the cytoplasm. The catalysed reaction is (2E,6E)-farnesyl diphosphate = (E)-beta-farnesene + diphosphate. It carries out the reaction (2E,6E)-farnesyl diphosphate = alpha-copaene + diphosphate. It catalyses the reaction (2E,6E)-farnesyl diphosphate = (1S,5S,6R)-alpha-bergamotene + diphosphate. The enzyme catalyses (2E,6E)-farnesyl diphosphate = (-)-(E)-beta-caryophyllene + diphosphate. The catalysed reaction is (2E,6E)-farnesyl diphosphate = delta-cadinene + diphosphate. It carries out the reaction (2E,6E)-farnesyl diphosphate = (+)-germacrene D + diphosphate. It catalyses the reaction (2E,6E)-farnesyl diphosphate = alpha-zingiberene + diphosphate. The enzyme catalyses (2E,6E)-farnesyl diphosphate = alpha-muurolene + diphosphate. The catalysed reaction is (2E,6E)-farnesyl diphosphate = (S)-beta-bisabolene + diphosphate. It carries out the reaction (2E,6E)-farnesyl diphosphate = beta-sesquiphellandrene + diphosphate. It catalyses the reaction (2E,6E)-farnesyl diphosphate = sesquisabinene A + diphosphate. The protein operates within secondary metabolite biosynthesis; terpenoid biosynthesis. Sesquiterpene cyclase catalyzing mainly the production of beta-farnesene and alpha-bergamotene in equal amounts from farnesyl diphosphate. Also mediates the biosynthesis of minor sesquiterpene hydrocarbons including alpha-muurolene, beta-bisabolene, zingiberene, sesquiphellandrene, sesquisabinene A, germacrene D, delta-cadinene, alpha-copaene and (E)-beta-caryophyllene. Involved in indirect defense by producing volatile signals attracting natural enemies of herbivores. The sequence is that of (E)-beta-farnesene synthase from Zea mays (Maize).